We begin with the raw amino-acid sequence, 205 residues long: Thymidylate kinase (205 aa).

7-14 (GIDGSGKT) provides a ligand contact to ATP.

This sequence belongs to the thymidylate kinase family.

It carries out the reaction dTMP + ATP = dTDP + ADP. In terms of biological role, phosphorylation of dTMP to form dTDP in both de novo and salvage pathways of dTTP synthesis. This is Thymidylate kinase from Wolbachia sp. subsp. Brugia malayi (strain TRS).